The following is a 30-amino-acid chain: Mejucin (30 aa).

It is found in the secreted. In terms of biological role, bacteriocin that inhibits the growth of several Gram-positive bacteria, especially the food-borne pathogens L.monocytogenes, B.cereus strain ATCC 11778, B.cereus strain ATCC 21366, B.cereus strain ATCC 10876 and B.cereus strain ATCC 14579. Likely to act by disrupting the pathogen membrane resulting in leakage of intracellular constituents. Does not inhibit the growth of Gram-negative bacteria. The protein is Mejucin of Bacillus subtilis.